A 138-amino-acid polypeptide reads, in one-letter code: Basic phospholipase A2 Tbo-G6D49 (138 aa).

The first 16 residues, 1 to 16, serve as a signal peptide directing secretion; it reads MRTLWIMAVLLVGVEG. Cystine bridges form between cysteine 42-cysteine 131, cysteine 44-cysteine 60, cysteine 59-cysteine 111, cysteine 65-cysteine 138, cysteine 66-cysteine 104, cysteine 73-cysteine 97, and cysteine 91-cysteine 102. Ca(2+)-binding residues include tyrosine 43, glycine 45, and glycine 47. Residue histidine 63 is part of the active site. Aspartate 64 provides a ligand contact to Ca(2+). Aspartate 105 is an active-site residue.

In terms of assembly, monomer. Ca(2+) serves as cofactor. Expressed by the venom gland.

The protein resides in the secreted. The enzyme catalyses a 1,2-diacyl-sn-glycero-3-phosphocholine + H2O = a 1-acyl-sn-glycero-3-phosphocholine + a fatty acid + H(+). Its function is as follows. Snake venom phospholipase A2 (PLA2) that impairs hemostasis. It weakly inhibits ADP-induced platelet aggregation when tested on platelet rich plasma from human and rabbit blood (15-25% of inhibition at 5-10 ug of enzyme), and dose-dependently inhibits blood coagulation, possibly by inhibiting thrombin activation. Exhibits strong hydrolytic activities toward L-dipalmitoyl phosphatidylcholine. PLA2 catalyzes the calcium-dependent hydrolysis of the 2-acyl groups in 3-sn-phosphoglycerides. The polypeptide is Basic phospholipase A2 Tbo-G6D49 (Craspedocephalus borneensis (Borneo pit viper)).